A 373-amino-acid chain; its full sequence is Probable peptidoglycan glycosyltransferase FtsW (373 aa).

A run of 9 helical transmembrane segments spans residues 15 to 35, 48 to 68, 80 to 100, 144 to 164, 168 to 188, 192 to 212, 278 to 298, 311 to 331, and 342 to 362; these read LVIL…VYSA, FYFL…MAVA, AVPI…PGIG, FFST…LILL, DLGA…AAGT, YIIA…MNVD, LGLI…LRGV, FLAF…MAVV, and LPFI…VGIL.

This sequence belongs to the SEDS family. FtsW subfamily.

The protein localises to the cell inner membrane. The catalysed reaction is [GlcNAc-(1-&gt;4)-Mur2Ac(oyl-L-Ala-gamma-D-Glu-L-Lys-D-Ala-D-Ala)](n)-di-trans,octa-cis-undecaprenyl diphosphate + beta-D-GlcNAc-(1-&gt;4)-Mur2Ac(oyl-L-Ala-gamma-D-Glu-L-Lys-D-Ala-D-Ala)-di-trans,octa-cis-undecaprenyl diphosphate = [GlcNAc-(1-&gt;4)-Mur2Ac(oyl-L-Ala-gamma-D-Glu-L-Lys-D-Ala-D-Ala)](n+1)-di-trans,octa-cis-undecaprenyl diphosphate + di-trans,octa-cis-undecaprenyl diphosphate + H(+). Its pathway is cell wall biogenesis; peptidoglycan biosynthesis. Its function is as follows. Peptidoglycan polymerase that is essential for cell division. In Geobacter sulfurreducens (strain DL-1 / KN400), this protein is Probable peptidoglycan glycosyltransferase FtsW.